Consider the following 136-residue polypeptide: Small ribosomal subunit protein uS11 (136 aa).

The protein belongs to the universal ribosomal protein uS11 family. In terms of assembly, part of the 30S ribosomal subunit. Interacts with proteins S7 and S18. Binds to IF-3.

In terms of biological role, located on the platform of the 30S subunit, it bridges several disparate RNA helices of the 16S rRNA. Forms part of the Shine-Dalgarno cleft in the 70S ribosome. This chain is Small ribosomal subunit protein uS11, found in Leptospira borgpetersenii serovar Hardjo-bovis (strain JB197).